The primary structure comprises 56 residues: uncharacterized protein (56 aa).

4Fe-4S ferredoxin-type domains lie at 2-28 (VKID…NLIE) and 29-56 (HIIV…LEGE). [4Fe-4S] cluster-binding residues include C9, C12, C15, C19, C38, C41, C44, and C48.

Requires [4Fe-4S] cluster as cofactor.

In terms of biological role, ferredoxins are iron-sulfur proteins that transfer electrons in a wide variety of metabolic reactions. This is an uncharacterized protein from Methanocaldococcus jannaschii (strain ATCC 43067 / DSM 2661 / JAL-1 / JCM 10045 / NBRC 100440) (Methanococcus jannaschii).